Consider the following 199-residue polypeptide: Mediator of RNA polymerase II transcription subunit 7 (199 aa).

Belongs to the Mediator complex subunit 7 family. In terms of assembly, component of the Mediator complex.

The protein localises to the nucleus. Its function is as follows. Component of the Mediator complex, a coactivator involved in the regulated transcription of nearly all RNA polymerase II-dependent genes. Mediator functions as a bridge to convey information from gene-specific regulatory proteins to the basal RNA polymerase II transcription machinery. Mediator is recruited to promoters by direct interactions with regulatory proteins and serves as a scaffold for the assembly of a functional preinitiation complex with RNA polymerase II and the general transcription factors. The sequence is that of Mediator of RNA polymerase II transcription subunit 7 (MED7) from Eremothecium gossypii (strain ATCC 10895 / CBS 109.51 / FGSC 9923 / NRRL Y-1056) (Yeast).